The following is a 272-amino-acid chain: Type II secretion system protein C (272 aa).

Residues 1 to 16 are Cytoplasmic-facing; that stretch reads MNISKLPPLSPSVIRR. A helical membrane pass occupies residues 17–35; it reads ILFYLLMLLFCQQLAMIFW. Residues 36–272 lie on the Periplasmic side of the membrane; the sequence is RIGLPDNAPV…DIYMEFGGDE (237 aa).

Belongs to the GSP C family.

Its subcellular location is the cell inner membrane. Functionally, involved in a type II secretion system (T2SS, formerly general secretion pathway, GSP) for the export of proteins. Required for the translocation of the multiple pectic enzymes. The polypeptide is Type II secretion system protein C (outC) (Dickeya dadantii (strain 3937) (Erwinia chrysanthemi (strain 3937))).